The sequence spans 91 residues: Dynein light chain 1, cytoplasmic (91 aa).

It belongs to the dynein light chain family. In terms of assembly, homodimer. Cytoplasmic dynein consists of two catalytic heavy chains (HCs) and a number of non-catalytic subunits which present intermediate chains (ICs), light intermediate chains (LICs) and light chains (LCs). Component of the nuclear pore complex (NPC). NPC constitutes the exclusive means of nucleocytoplasmic transport. NPCs allow the passive diffusion of ions and small molecules and the active, nuclear transport receptor-mediated bidirectional transport of macromolecules such as proteins, RNAs, ribonucleoparticles (RNPs), and ribosomal subunits across the nuclear envelope. Due to its 8-fold rotational symmetry, all subunits are present with 8 copies or multiples thereof.

It is found in the cytoplasm. The protein resides in the cytoskeleton. The protein localises to the nucleus. Its subcellular location is the nuclear pore complex. Functionally, acts as one of several non-catalytic accessory components of the cytoplasmic dynein complex that are thought to be involved in linking dynein to cargos and to adapter proteins that regulate dynein function. Cytoplasmic dynein 1 acts as a motor for the intracellular retrograde motility of vesicles and organelles along microtubules. May play a role in changing or maintaining the spatial distribution of cytoskeletal structures. Also a component of the nuclear pore complex. This Debaryomyces hansenii (strain ATCC 36239 / CBS 767 / BCRC 21394 / JCM 1990 / NBRC 0083 / IGC 2968) (Yeast) protein is Dynein light chain 1, cytoplasmic (DYN2).